Reading from the N-terminus, the 278-residue chain is MEMLEEHRCFEGWQQRWRHDSSTLNCPMTFSIFLPPPRDHTPPPVLYWLSGLTCNDENFTTKAGAQRVAAELGIVLVMPDTSPRGEKVANDDGYDLGQGAGFYLNATQPPWATHYRMYDYLRDELPALVQSQFNVSDRCAISGHSMGGHGALIMALKNPGKYTSVSAFAPIVNPCSVPWGIKAFSRYLGEDKNAWLEWDSCALMYASNAQDAIPTLIDQGDNDQFLADQLQPAVLAEAARQKAWPMTLRIQPGYDHSYYFIASFIEDHLRFHAQYLLK.

Residues S145, D223, and H256 each act as charge relay system in the active site.

This sequence belongs to the esterase D family.

It catalyses the reaction S-formylglutathione + H2O = formate + glutathione + H(+). Its function is as follows. Serine hydrolase involved in the detoxification of formaldehyde. Hydrolyzes S-formylglutathione to glutathione and formate. This is S-formylglutathione hydrolase YeiG (yeiG) from Escherichia coli O157:H7.